Reading from the N-terminus, the 140-residue chain is Small ribosomal subunit protein uS11 (140 aa).

Residues 116-140 are disordered; sequence GRVEDVTPIPHDGTRPKGGRRGRRV.

Belongs to the universal ribosomal protein uS11 family. Part of the 30S ribosomal subunit.

In terms of biological role, located on the platform of the 30S subunit. The polypeptide is Small ribosomal subunit protein uS11 (Thermococcus kodakarensis (strain ATCC BAA-918 / JCM 12380 / KOD1) (Pyrococcus kodakaraensis (strain KOD1))).